Reading from the N-terminus, the 512-residue chain is MARAVHRSGLVALGIATALMASCAFAAKDVVVAVGSNFTTLDPYDANDTLSQAVAKSFYQGLFGLDKEMKLKNVLAESYTVSDDGITYTVKLREGIKFQDGTDFNAAAVKANLDRASDPANHLKRYNLYKNIAKTEAIDPTTVKITLKQPFSAFINILAHPATAMISPAALEKYGKEIGFHPVGTGPYELDTWNQTDFVKVKKFAGYWQPGLPKLDSITWRPVADNNTRAAMLQTGEAQFAFPIPYEQAALLEKNKNIELMASPSIMQRYISMNVTQKPFDNPKVREALNYAINRPALVKVAFAGYATPATGVVPPSIAYAQSYKPWPYDPVKARELLKEAGYPNGFSTTLWSSHNHSTAQKVLQFTQQQLAQVGIKAQVTAMDAGQRAAEVEGKGQKESGVRMFYTGWSASTGEADWALSPLFASQNWPPTLFNTAFYSNKQVDDFLAQALKTNDPAEKTRLYKAAQDIIWQESPWIPLVVEKLVSAHSKNLTGFWIMPDTGFSFEDADLQ.

The first 26 residues, 1-26 (MARAVHRSGLVALGIATALMASCAFA), serve as a signal peptide directing secretion.

The protein belongs to the bacterial solute-binding protein 5 family. As to quaternary structure, the complex is composed of two ATP-binding proteins (GsiA), two transmembrane proteins (GsiC and GsiD) and a solute-binding protein (GsiB).

The protein localises to the periplasm. Functionally, part of the ABC transporter complex GsiABCD involved in glutathione import. Binds glutathione. The protein is Glutathione-binding protein GsiB of Escherichia coli O157:H7.